We begin with the raw amino-acid sequence, 353 residues long: Photosystem II D2 protein (353 aa).

Position 2 is an N-acetylthreonine (Thr-2). At Thr-2 the chain carries Phosphothreonine. Residues Cys-41–Thr-61 form a helical membrane-spanning segment. Residue His-118 coordinates chlorophyll a. A helical transmembrane segment spans residues Gly-125–Pro-141. Pheophytin a contacts are provided by Gln-130 and Asn-143. Residues Val-153 to Ser-166 traverse the membrane as a helical segment. His-198 contacts chlorophyll a. A helical transmembrane segment spans residues Ala-208–Asp-228. Residues His-215 and Phe-262 each coordinate a plastoquinone. His-215 lines the Fe cation pocket. His-269 provides a ligand contact to Fe cation. The chain crosses the membrane as a helical span at residues Gly-279 to Arg-295.

The protein belongs to the reaction center PufL/M/PsbA/D family. As to quaternary structure, PSII is composed of 1 copy each of membrane proteins PsbA, PsbB, PsbC, PsbD, PsbE, PsbF, PsbH, PsbI, PsbJ, PsbK, PsbL, PsbM, PsbT, PsbX, PsbY, PsbZ, Psb30/Ycf12, at least 3 peripheral proteins of the oxygen-evolving complex and a large number of cofactors. It forms dimeric complexes. The D1/D2 heterodimer binds P680, chlorophylls that are the primary electron donor of PSII, and subsequent electron acceptors. It shares a non-heme iron and each subunit binds pheophytin, quinone, additional chlorophylls, carotenoids and lipids. There is also a Cl(-1) ion associated with D1 and D2, which is required for oxygen evolution. The PSII complex binds additional chlorophylls, carotenoids and specific lipids. serves as cofactor.

It localises to the plastid. The protein resides in the chloroplast thylakoid membrane. It catalyses the reaction 2 a plastoquinone + 4 hnu + 2 H2O = 2 a plastoquinol + O2. Its function is as follows. Photosystem II (PSII) is a light-driven water:plastoquinone oxidoreductase that uses light energy to abstract electrons from H(2)O, generating O(2) and a proton gradient subsequently used for ATP formation. It consists of a core antenna complex that captures photons, and an electron transfer chain that converts photonic excitation into a charge separation. The D1/D2 (PsbA/PsbD) reaction center heterodimer binds P680, the primary electron donor of PSII as well as several subsequent electron acceptors. D2 is needed for assembly of a stable PSII complex. This is Photosystem II D2 protein from Morus indica (Mulberry).